Consider the following 163-residue polypeptide: UPF0262 protein RPE_4483 (163 aa).

This sequence belongs to the UPF0262 family.

The sequence is that of UPF0262 protein RPE_4483 from Rhodopseudomonas palustris (strain BisA53).